Consider the following 338-residue polypeptide: Lipoate-protein ligase A (338 aa).

A BPL/LPL catalytic domain is found at 29–216 (SPDQRVLFLW…AFFAYYDEQV (188 aa)). ATP is bound by residues arginine 71, 76–79 (GAVF), and lysine 134. Residue lysine 134 coordinates (R)-lipoate.

This sequence belongs to the LplA family. Monomer.

It localises to the cytoplasm. It catalyses the reaction L-lysyl-[lipoyl-carrier protein] + (R)-lipoate + ATP = N(6)-[(R)-lipoyl]-L-lysyl-[lipoyl-carrier protein] + AMP + diphosphate + H(+). The protein operates within protein modification; protein lipoylation via exogenous pathway; protein N(6)-(lipoyl)lysine from lipoate: step 1/2. It functions in the pathway protein modification; protein lipoylation via exogenous pathway; protein N(6)-(lipoyl)lysine from lipoate: step 2/2. Its function is as follows. Catalyzes both the ATP-dependent activation of exogenously supplied lipoate to lipoyl-AMP and the transfer of the activated lipoyl onto the lipoyl domains of lipoate-dependent enzymes. The protein is Lipoate-protein ligase A of Yersinia pseudotuberculosis serotype IB (strain PB1/+).